Consider the following 359-residue polypeptide: Protein URE2 (359 aa).

A disordered region spans residues 39 to 82; sequence FSAGVNNNNNNSSSSNNNNNNNNNAQNNNSGRNGSQSNDNGNNI. Positions 44 to 81 are enriched in low complexity; that stretch reads NNNNNNSSSSNNNNNNNNNAQNNNSGRNGSQSNDNGNN. One can recognise a GST N-terminal domain in the interval 117 to 201; the sequence is EGYTLFSHRS…HLVNKYYKET (85 aa). The GST C-terminal domain maps to 210 to 359; sequence DLADQSQINA…PAVIKALRGE (150 aa).

This sequence belongs to the GST superfamily. In terms of assembly, homodimer.

Plays an important role in the cellular response to the nitrogen source. URE2 gene plays a major part in the repression of GLN1 and GDH2 genes by glutamine, and is required for the inactivation of glutamine synthetase. URE2 gene product may catalytically inactivate GLN3 in response to an increase in the intracellular concentration of glutamine. The sequence is that of Protein URE2 (URE2) from Saccharomyces paradoxus (Yeast).